We begin with the raw amino-acid sequence, 151 residues long: Small ribosomal subunit protein uS15 (151 aa).

The disordered stretch occupies residues 1-20; sequence MARLHSGKRGSSGSTRPLRT.

This sequence belongs to the universal ribosomal protein uS15 family. Part of the 30S ribosomal subunit.

The chain is Small ribosomal subunit protein uS15 from Methanococcus maripaludis (strain C7 / ATCC BAA-1331).